Here is a 343-residue protein sequence, read N- to C-terminus: Heme A synthase (343 aa).

A run of 8 helical transmembrane segments spans residues 13–33 (VALWLFVVAVLVFAMVVVGGA), 96–116 (HRLLGRLVGVVFAIPFVFFLI), 130–150 (VLLGLGGLQGVVGWWMVSSGL), 165–185 (LGLALALFVFVIWTALDAWAG), 197–217 (GWALAFLGAVFFQSLLGALVA), 258–278 (LHHRLMAYALFVAAIVAGVAA), 290–310 (LTAFVLVGVVCLQAGLGIWTL), and 311–331 (MTAVPLALGVLHQAGAAILLA). Heme is bound at residue His-260. Residue His-322 participates in heme binding.

The protein belongs to the COX15/CtaA family. Type 2 subfamily. In terms of assembly, interacts with CtaB. Requires heme b as cofactor.

The protein localises to the cell membrane. It catalyses the reaction Fe(II)-heme o + 2 A + H2O = Fe(II)-heme a + 2 AH2. It functions in the pathway porphyrin-containing compound metabolism; heme A biosynthesis; heme A from heme O: step 1/1. Its function is as follows. Catalyzes the conversion of heme O to heme A by two successive hydroxylations of the methyl group at C8. The first hydroxylation forms heme I, the second hydroxylation results in an unstable dihydroxymethyl group, which spontaneously dehydrates, resulting in the formyl group of heme A. In Caulobacter sp. (strain K31), this protein is Heme A synthase.